Consider the following 695-residue polypeptide: IQ domain-containing protein E (695 aa).

The disordered stretch occupies residues 29 to 55; it reads KAKRKAFHKPPPTSPKSPYLSKPRKVA. Coiled-coil stretches lie at residues 157–264, 292–358, and 387–477; these read LHVQ…RLQT, SALL…SSKS, and NKDH…CPEV. Ser-322 is modified (phosphoserine). Disordered regions lie at residues 357-390, 465-521, 564-599, and 618-695; these read KSHA…NKDH, EMKK…RRDA, ASKA…TGSP, and RARH…NFPV. The span at 465–482 shows a compositional bias: basic and acidic residues; that stretch reads EMKKEEKEDCPEVPHKAQ. 2 IQ domains span residues 542–571 and 601–630; these read LDEA…HGSE and QEEA…RTTT.

Component of the EvC complex composed of EFCAB7, IQCE, EVC2 and EVC; built from two subcomplexes, EVC2:EVC and EFCAB7:IQCE. Interacts (via N-terminus) with EFCAB7 (via EF-hands 1 and 2); this interaction anchors the EVC-EVC2 complex in a signaling microdomain at the base of cilia and stimulates the Hedgehog (Hh) pathway. Interacts with EVC2 (via N-terminal end). Interacts with EVC.

The protein resides in the cell projection. It is found in the cilium membrane. In terms of biological role, component of the EvC complex that positively regulates ciliary Hedgehog (Hh) signaling. Required for proper limb morphogenesis. The chain is IQ domain-containing protein E (IQCE) from Homo sapiens (Human).